The chain runs to 294 residues: MSNLKEIKRKIKSVYNTQKTTNAMKLVSTAKLKKAEEAAKRSKIYAQKIDEILSEISVQINKIVHNEDDVRLFLFHKKEQIKTVDLIFITADKGLCGGFNIKTLKTVSEMLKEYEAKNINIRLRAIGKTGIEYFNFQKIELLEKYFHLSSSPDYEKACEVIHAAVDDFLNGNTDEVILVHNGYKNMITQELKINHLIPVEPKSIEQTHNSLLELEPEGTELLEDLIKTYFEYNMYYALIDSLAAEHSARMQAMDNATNNAKARVKQLNLAYNKARQESITTELIEIISGVESMK.

This sequence belongs to the ATPase gamma chain family. In terms of assembly, F-type ATPases have 2 components, CF(1) - the catalytic core - and CF(0) - the membrane proton channel. CF(1) has five subunits: alpha(3), beta(3), gamma(1), delta(1), epsilon(1). CF(0) has three main subunits: a, b and c.

It is found in the cell inner membrane. Produces ATP from ADP in the presence of a proton gradient across the membrane. The gamma chain is believed to be important in regulating ATPase activity and the flow of protons through the CF(0) complex. The polypeptide is ATP synthase gamma chain (Campylobacter jejuni subsp. jejuni serotype O:23/36 (strain 81-176)).